Reading from the N-terminus, the 260-residue chain is Flap endonuclease Xni (260 aa).

Asp104 contributes to the Mg(2+) binding site. One can recognise a 5'-3' exonuclease domain in the interval 160-249; sequence VSPQQLTDYW…LNGNLQQLRL (90 aa). K(+)-binding residues include Leu171, Ala172, Pro180, Val182, and Ile185. The tract at residues 184–189 is interaction with DNA; sequence GIGPKS.

It belongs to the Xni family. Mg(2+) serves as cofactor. The cofactor is K(+).

Has flap endonuclease activity. During DNA replication, flap endonucleases cleave the 5'-overhanging flap structure that is generated by displacement synthesis when DNA polymerase encounters the 5'-end of a downstream Okazaki fragment. The protein is Flap endonuclease Xni of Pectobacterium carotovorum subsp. carotovorum (strain PC1).